The chain runs to 76 residues: Sec-independent protein translocase protein TatA (76 aa).

Residues 1-21 (MGSFSIWHWLIVLVIVALVFG) form a helical membrane-spanning segment. Basic and acidic residues-rich tracts occupy residues 39–50 (FKDGMKGEDDKP) and 64–76 (GTVDVEVKEKSNS). The interval 39-76 (FKDGMKGEDDKPAAQNAAPSQVADKGTVDVEVKEKSNS) is disordered.

Belongs to the TatA/E family. In terms of assembly, the Tat system comprises two distinct complexes: a TatABC complex, containing multiple copies of TatA, TatB and TatC subunits, and a separate TatA complex, containing only TatA subunits. Substrates initially bind to the TatABC complex, which probably triggers association of the separate TatA complex to form the active translocon.

Its subcellular location is the cell inner membrane. Functionally, part of the twin-arginine translocation (Tat) system that transports large folded proteins containing a characteristic twin-arginine motif in their signal peptide across membranes. TatA could form the protein-conducting channel of the Tat system. The sequence is that of Sec-independent protein translocase protein TatA from Herminiimonas arsenicoxydans.